Consider the following 274-residue polypeptide: D-aminoacyl-tRNA deacylase (274 aa).

The protein belongs to the DtdA deacylase family. As to quaternary structure, monomer. The cofactor is Zn(2+).

It catalyses the reaction a D-aminoacyl-tRNA + H2O = a tRNA + a D-alpha-amino acid + H(+). It carries out the reaction glycyl-tRNA(Ala) + H2O = tRNA(Ala) + glycine + H(+). In terms of biological role, D-aminoacyl-tRNA deacylase with broad substrate specificity. By recycling D-aminoacyl-tRNA to D-amino acids and free tRNA molecules, this enzyme counteracts the toxicity associated with the formation of D-aminoacyl-tRNA entities in vivo. The sequence is that of D-aminoacyl-tRNA deacylase from Pyrococcus horikoshii (strain ATCC 700860 / DSM 12428 / JCM 9974 / NBRC 100139 / OT-3).